Here is a 323-residue protein sequence, read N- to C-terminus: Zinc finger C2HC domain-containing protein 1A (323 aa).

The C2HC/C3H-type 1 zinc finger occupies 7–36; it reads ELRPCKICGRTFFPATLKKHVPICQKTSVK. Residues Cys11, Cys14, His26, and Cys30 each contribute to the Zn(2+) site. The disordered stretch occupies residues 35 to 75; that stretch reads VKKRKTFESSRQRAEGTDINTVKPVKPRPEPPKKQSNWKRK. Over residues 40 to 50 the composition is skewed to basic and acidic residues; the sequence is TFESSRQRAEG. The segment at 110–139 adopts a C2HC/C3H-type 2 zinc-finger fold; it reads DYVQCPYCQRRFNQNAADRHINFCKEQSAR. Residues Cys114, Cys117, His129, and Cys133 each coordinate Zn(2+). The tract at residues 138–273 is disordered; it reads ARMGQKIKGG…EAAMGYDSSD (136 aa). Over residues 208-226 the composition is skewed to polar residues; it reads KYQTQSPAHKNSTMVTSPQ.

This sequence belongs to the ZC2HC1 family. Requires Zn(2+) as cofactor.

The sequence is that of Zinc finger C2HC domain-containing protein 1A (zc2hc1a) from Xenopus laevis (African clawed frog).